Reading from the N-terminus, the 282-residue chain is Shikimate dehydrogenase (NADP(+)) (282 aa).

Residues 18–20 (SRS) and threonine 65 contribute to the shikimate site. Lysine 69 (proton acceptor) is an active-site residue. Shikimate contacts are provided by asparagine 90 and aspartate 106. Residues 134 to 138 (GAGGA), 158 to 163 (NRTAAR), and isoleucine 223 each bind NADP(+). A shikimate-binding site is contributed by tyrosine 225. Glycine 246 is a binding site for NADP(+).

The protein belongs to the shikimate dehydrogenase family. Homodimer.

The catalysed reaction is shikimate + NADP(+) = 3-dehydroshikimate + NADPH + H(+). The protein operates within metabolic intermediate biosynthesis; chorismate biosynthesis; chorismate from D-erythrose 4-phosphate and phosphoenolpyruvate: step 4/7. Its function is as follows. Involved in the biosynthesis of the chorismate, which leads to the biosynthesis of aromatic amino acids. Catalyzes the reversible NADPH linked reduction of 3-dehydroshikimate (DHSA) to yield shikimate (SA). This chain is Shikimate dehydrogenase (NADP(+)), found in Methylobacterium radiotolerans (strain ATCC 27329 / DSM 1819 / JCM 2831 / NBRC 15690 / NCIMB 10815 / 0-1).